The sequence spans 449 residues: Adenylosuccinate lyase (449 aa).

N(6)-(1,2-dicarboxyethyl)-AMP contacts are provided by residues 9–10 (RY), 75–77 (KHD), and 102–103 (TS). Catalysis depends on His150, which acts as the Proton donor/acceptor. Gln224 is a binding site for N(6)-(1,2-dicarboxyethyl)-AMP. Ser275 (proton donor/acceptor) is an active-site residue. Residues Ser276, 281 to 283 (KMN), and 320 to 324 (SSERI) each bind N(6)-(1,2-dicarboxyethyl)-AMP.

The protein belongs to the lyase 1 family. Adenylosuccinate lyase subfamily. As to quaternary structure, homotetramer. Residues from neighboring subunits contribute catalytic and substrate-binding residues to each active site.

The catalysed reaction is N(6)-(1,2-dicarboxyethyl)-AMP = fumarate + AMP. It catalyses the reaction (2S)-2-[5-amino-1-(5-phospho-beta-D-ribosyl)imidazole-4-carboxamido]succinate = 5-amino-1-(5-phospho-beta-D-ribosyl)imidazole-4-carboxamide + fumarate. It functions in the pathway purine metabolism; AMP biosynthesis via de novo pathway; AMP from IMP: step 2/2. The protein operates within purine metabolism; IMP biosynthesis via de novo pathway; 5-amino-1-(5-phospho-D-ribosyl)imidazole-4-carboxamide from 5-amino-1-(5-phospho-D-ribosyl)imidazole-4-carboxylate: step 2/2. In terms of biological role, catalyzes two reactions in de novo purine nucleotide biosynthesis. Catalyzes the breakdown of 5-aminoimidazole- (N-succinylocarboxamide) ribotide (SAICAR or 2-[5-amino-1-(5-phospho-beta-D-ribosyl)imidazole-4-carboxamido]succinate) to 5-aminoimidazole-4-carboxamide ribotide (AICAR or 5-amino-1-(5-phospho-beta-D-ribosyl)imidazole-4-carboxamide) and fumarate, and of adenylosuccinate (ADS or N(6)-(1,2-dicarboxyethyl)-AMP) to adenosine monophosphate (AMP) and fumarate. The polypeptide is Adenylosuccinate lyase (purB) (Methanothermobacter thermautotrophicus (strain ATCC 29096 / DSM 1053 / JCM 10044 / NBRC 100330 / Delta H) (Methanobacterium thermoautotrophicum)).